The following is a 292-amino-acid chain: MIKITVPATSANIGPGFDSLGVALKLYLTLEVYEETSEWQVIHDYGANMPSDVNNFIVKTALLLAPNLTPHRIVVKSDIPLARGLGSSSSALLAGLAMANVLADMRLNNDALLKQATALEGHPDNVAPALLGGSVAAFYDGEQVYHAPLSLPKDINFITFIPNYELLTTEARNALPAKMTFKDSVAASAISNTLTAALNAGDFNTARVLIEKDQFHEQARAHLAPHLKIIRDTAHQLEIIGTYLSGAGPTVITLVSKDNATKLLKVLTNMALPGKLLLLEPDYTGLQITKNN.

80 to 90 (PLARGLGSSSS) lines the ATP pocket.

Belongs to the GHMP kinase family. Homoserine kinase subfamily.

It is found in the cytoplasm. It carries out the reaction L-homoserine + ATP = O-phospho-L-homoserine + ADP + H(+). It functions in the pathway amino-acid biosynthesis; L-threonine biosynthesis; L-threonine from L-aspartate: step 4/5. In terms of biological role, catalyzes the ATP-dependent phosphorylation of L-homoserine to L-homoserine phosphate. This chain is Homoserine kinase, found in Leuconostoc mesenteroides subsp. mesenteroides (strain ATCC 8293 / DSM 20343 / BCRC 11652 / CCM 1803 / JCM 6124 / NCDO 523 / NBRC 100496 / NCIMB 8023 / NCTC 12954 / NRRL B-1118 / 37Y).